The primary structure comprises 257 residues: UPF0246 protein Rpic_2164 (257 aa).

The protein belongs to the UPF0246 family.

In Ralstonia pickettii (strain 12J), this protein is UPF0246 protein Rpic_2164.